The chain runs to 239 residues: tRNA (guanine-N(1)-)-methyltransferase (239 aa).

S-adenosyl-L-methionine contacts are provided by residues glycine 109 and 133-138; that span reads IGDYVL. Disordered regions lie at residues 163–187 and 217–239; these read PASR…YTRP and QRTR…DPGR. 2 stretches are compositionally biased toward basic and acidic residues: residues 165 to 180 and 217 to 226; these read SRHD…RRLE and QRTRERRPEL.

The protein belongs to the RNA methyltransferase TrmD family. In terms of assembly, homodimer.

It localises to the cytoplasm. The enzyme catalyses guanosine(37) in tRNA + S-adenosyl-L-methionine = N(1)-methylguanosine(37) in tRNA + S-adenosyl-L-homocysteine + H(+). In terms of biological role, specifically methylates guanosine-37 in various tRNAs. The protein is tRNA (guanine-N(1)-)-methyltransferase of Mycolicibacterium paratuberculosis (strain ATCC BAA-968 / K-10) (Mycobacterium paratuberculosis).